Reading from the N-terminus, the 132-residue chain is Small ribosomal subunit protein uS11 (132 aa).

This sequence belongs to the universal ribosomal protein uS11 family. Part of the 30S ribosomal subunit. Interacts with proteins S7 and S18. Binds to IF-3.

Functionally, located on the platform of the 30S subunit, it bridges several disparate RNA helices of the 16S rRNA. Forms part of the Shine-Dalgarno cleft in the 70S ribosome. This chain is Small ribosomal subunit protein uS11, found in Chlamydia trachomatis serovar D (strain ATCC VR-885 / DSM 19411 / UW-3/Cx).